The sequence spans 384 residues: Class V chitinase CHIT5a (384 aa).

A signal peptide spans 1–27 (MAVQKIIITPILVFLVTIFFNVSSSSS). Residues asparagine 29, asparagine 114, and asparagine 133 are each glycosylated (N-linked (GlcNAc...) asparagine). Residues 39 to 384 (GVRSAYWPAG…SKQASNAWGH (346 aa)) enclose the GH18 domain. The Proton donor role is filled by glutamate 152. N-linked (GlcNAc...) asparagine glycans are attached at residues asparagine 195 and asparagine 234.

It belongs to the glycosyl hydrolase 18 family. Chitinase class V subfamily.

It catalyses the reaction Random endo-hydrolysis of N-acetyl-beta-D-glucosaminide (1-&gt;4)-beta-linkages in chitin and chitodextrins.. It functions in the pathway glycan degradation; chitin degradation. Functionally, possesses chitinase activity in vitro toward glycol chitin, carboxymethyl-chitin, colloidal chitin, and the chitin oligosaccharides (N-acetylglucosamine) (GlcNAc)6 and (GlcNAc)5. Hydrolyzes (GlcNAc)6 into (GlcNAc)4 and (GlcNAc)2, or two (GlcNAc)3 molecules. Has the capacity to inhibit hyphal growth of the fungus Trichoderma viride in an agar-plate bioassay. In Medicago truncatula (Barrel medic), this protein is Class V chitinase CHIT5a.